A 320-amino-acid polypeptide reads, in one-letter code: Glutathione synthetase (320 aa).

Residues 133 to 317 (KMYTLQFAAV…LGEKVICWLE (185 aa)) enclose the ATP-grasp domain. An ATP-binding site is contributed by 159–215 (LEEHGAAVLKPLGGKAGEGILFLDPGDRNFNSLVEISTQHGKEPVMVQRFLPEAKEG). Mg(2+)-binding residues include Glu-288 and Asn-290.

Belongs to the prokaryotic GSH synthase family. Mg(2+) is required as a cofactor. Requires Mn(2+) as cofactor.

It catalyses the reaction gamma-L-glutamyl-L-cysteine + glycine + ATP = glutathione + ADP + phosphate + H(+). Its pathway is sulfur metabolism; glutathione biosynthesis; glutathione from L-cysteine and L-glutamate: step 2/2. The sequence is that of Glutathione synthetase from Synechocystis sp. (strain ATCC 27184 / PCC 6803 / Kazusa).